The primary structure comprises 422 residues: uncharacterized protein (422 aa).

Residues Ser-124, Ser-126, and Ser-151 each carry the phosphoserine modification. The segment at Thr-144–Lys-166 is disordered. A Glycyl lysine isopeptide (Lys-Gly) (interchain with G-Cter in SUMO2) cross-link involves residue Lys-250. Disordered regions lie at residues Ala-251–Ser-285 and Gly-299–Ala-324. A compositionally biased stretch (acidic residues) spans Glu-271 to Asn-282. Residues Ser-280 and Ser-306 each carry the phosphoserine modification. A compositionally biased stretch (low complexity) spans Ala-310 to Ala-324. Ser-351 carries the phosphoserine modification.

This is an uncharacterized protein from Homo sapiens (Human).